The primary structure comprises 187 residues: Large ribosomal subunit protein uL6 (187 aa).

The protein belongs to the universal ribosomal protein uL6 family. As to quaternary structure, part of the 50S ribosomal subunit.

In terms of biological role, this protein binds to the 23S rRNA, and is important in its secondary structure. It is located near the subunit interface in the base of the L7/L12 stalk, and near the tRNA binding site of the peptidyltransferase center. In Chloroflexus aggregans (strain MD-66 / DSM 9485), this protein is Large ribosomal subunit protein uL6.